Consider the following 218-residue polypeptide: uncharacterized protein (218 aa).

The region spanning 4–207 (WKVAAAQYEP…SLLLVGQRSS (204 aa)) is the CN hydrolase domain.

This is an uncharacterized protein from Escherichia coli (strain K12).